Consider the following 340-residue polypeptide: MTQINAQLAHEPRHDWTLPQVEALFDLPFMELMFQAATVHRAWFDPSELQLSQLLSVKTGGCAENCGYCSQSAHFKTGLKAEKLMDAEVVIAKAREARDGGAQRFCMGAAWRELKDRDLPKLAAMIGGVKALGLETCATLGMLTAEQAKQLKDAGLDYYNHNLDTGPEYYGDVVSTRTYQERLDTLAYVRDAGMSTCCGGIVGMGETRRDRASLLHQLATLPSHPDSLPVNALVPVAGTPLGDKVKREGEIDGLEFVRTVAVARIVCPKSMVRLSAGRDDMSRELQALCFMAGANSIFVGGKLLTTPLPNMDDDSKLFLDLNMRPMGSAKIVAPESVAAE.

Residues 47–269 form the Radical SAM core domain; it reads SELQLSQLLS…VAVARIVCPK (223 aa). [4Fe-4S] cluster contacts are provided by Cys62, Cys66, and Cys69. Residues Cys106, Cys137, Cys197, and Arg273 each coordinate [2Fe-2S] cluster.

Belongs to the radical SAM superfamily. Biotin synthase family. Homodimer. [4Fe-4S] cluster serves as cofactor. [2Fe-2S] cluster is required as a cofactor.

The enzyme catalyses (4R,5S)-dethiobiotin + (sulfur carrier)-SH + 2 reduced [2Fe-2S]-[ferredoxin] + 2 S-adenosyl-L-methionine = (sulfur carrier)-H + biotin + 2 5'-deoxyadenosine + 2 L-methionine + 2 oxidized [2Fe-2S]-[ferredoxin]. It participates in cofactor biosynthesis; biotin biosynthesis; biotin from 7,8-diaminononanoate: step 2/2. In terms of biological role, catalyzes the conversion of dethiobiotin (DTB) to biotin by the insertion of a sulfur atom into dethiobiotin via a radical-based mechanism. The polypeptide is Biotin synthase (Caulobacter sp. (strain K31)).